Consider the following 128-residue polypeptide: MAFTGKYETESEKNYDEFMKRLGLSSDRIEKGRNFKVISEIQQDGQNFTWSQHYPGGHSISNNFTIGKETEMETVGNKKFKVTVKMEGGKVVVDSANYHHTVEIVDGKLVEVSTFGGVIYERVSKKVA.

An N-acetylalanine modification is found at Ala2.

It belongs to the calycin superfamily. Fatty-acid binding protein (FABP) family.

It localises to the cytoplasm. It is found in the membrane. Functionally, binds to bile acids and is involved in enterohepatic bile acid metabolism. Required for efficient apical to basolateral transport of conjugated bile acids in ileal enterocytes. Stimulates gastric acid and pepsinogen secretion. The chain is Gastrotropin (FABP6) from Bos taurus (Bovine).